The following is a 313-amino-acid chain: Ankyrin repeat family A protein 2 (313 aa).

5 ANK repeats span residues 148-180 (ANSL…HTDE), 181-213 (EGFT…LLGK), 214-246 (GRES…EYDW), 247-279 (NGGT…IETD), and 280-313 (SGYN…NIKE).

Interacts (via ANK repeats) with CCDC8 (via PxLPxI/L motif); mediates the interaction with the 3M complex which is composed of CCDC8, CUL7 and OBSL1. Interacts (via ANK repeats) with HDAC4 (via PxLPxI/L motif). Interacts (via ANK repeats) with HDAC5 (via PxLPxI/L motif). Interacts (via ANK repeats) with LRP2/megalin (via PxLPxI/L motif). Interacts (via ANK repeats) with RFX7 (via PxLPxI/L motif). Interacts with AHRR. Interacts with NEK6.

The protein resides in the cytoplasm. The protein localises to the cytoskeleton. It is found in the membrane. Its function is as follows. May regulate the interaction between the 3M complex and the histone deacetylases HDAC4 and HDAC5. May also regulate LRP2/megalin. This is Ankyrin repeat family A protein 2 (ANKRA2) from Homo sapiens (Human).